The following is a 2541-amino-acid chain: Highly reducing polyketide synthase otaA (2541 aa).

A Ketosynthase family 3 (KS3) domain is found at 9 to 431 (SEPLAIIGLA…GTNAHVVLED (423 aa)). Residues cysteine 182, histidine 317, and histidine 355 each act as for beta-ketoacyl synthase activity in the active site. Positions 571–888 (FIFTGQGANW…GSLLKRYETD (318 aa)) constitute a Malonyl-CoA:ACP transacylase (MAT) domain. Residues 957 to 1092 (HELLGVPVED…GSVRVETGPH (136 aa)) are N-terminal hotdog fold. A dehydratase (DH) domain region spans residues 957–1251 (HELLGVPVED…GLDLVQLPPS (295 aa)). Residues 957-1254 (HELLGVPVED…LVQLPPSEDA (298 aa)) enclose the PKS/mFAS DH domain. The segment at 1108–1254 (TESVDIAQMY…LVQLPPSEDA (147 aa)) is C-terminal hotdog fold. 2 residues coordinate S-adenosyl-L-methionine: isoleucine 1420 and glutamate 1442. A methyltransferase (CMeT) domain region spans residues 1433–1605 (HAQTGIKVLE…DQELRNAGLQ (173 aa)). Positions 1838-2141 (HQPNGFHFVE…RQGNAGPWVL (304 aa)) constitute an Enoyl reductase (ER) domain. One can recognise a Ketoreductase (KR) domain in the interval 2165 to 2344 (ASYLLIGGFG…PATSISLGSV (180 aa)). One can recognise a Carrier domain in the interval 2453–2530 (DAVELVTRAI…QLAQQAAGGS (78 aa)). Serine 2490 carries the post-translational modification O-(pantetheine 4'-phosphoryl)serine.

It depends on pantetheine 4'-phosphate as a cofactor.

It carries out the reaction 4 malonyl-CoA + acetyl-CoA + 5 NADPH + 9 H(+) = 7-methylmellein + 3 CO2 + 5 NADP(+) + 5 CoA + 4 H2O. It participates in mycotoxin biosynthesis. Highly reducing polyketide synthase; part of the gene cluster that mediates the biosynthesis of ochratoxin A (OTA), a mycotoxin composed of a chlorinated type I polyketide dihydroisocoumarin moiety linked to L-phenylalanine, and demonstrated to have nephrotoxic, immunotoxic, genotoxic, neurotoxic, and teratogenic properties. OtaA catalyzes the condensation of one acetate and 4 malonate units to form the isocoumarin group. The pathway begins with the highly reducing polyketide synthase otaA that catalyzes the formation of the isocoumarin group during the initial stages of biosynthesis, starting from one acetate and 4 malonate units, to originate the characteristic pentaketide skeleton 7-methylmellein (7-MM) of the OTA molecule. The newly identified cyclase otaY might be involved in the polyketide cyclization reaction during the initial steps of the OTA biosynthesis. 7-MM is then oxidized into 7-carboxymellein (also called ochratoxin beta) by the cytochrome P450 monooxygenase otaC. The NRPS encoded by the otaB gene is involved in the linking of phenylalanine to the dihydroisocoumarin ring. The reaction catalyzed by NRPS results in the production of ochratoxin B (OTB), which is the non-chlorinated analog of OTA and which subsequently serves as the substrate of the halogenase otaD for chlorination activity to form the final molecular structure of OTA, containing a chlorine atom in the C-5 position of the molecule. The polypeptide is Highly reducing polyketide synthase otaA (Aspergillus carbonarius (strain ITEM 5010)).